A 585-amino-acid chain; its full sequence is ATP-dependent lipid A-core flippase (585 aa).

The next 6 membrane-spanning stretches (helical) occupy residues 25–45, 63–83, 127–146, 150–170, 250–270, and 277–297; these read FLAALACMGVASLAEPVFPAI, WLFYPLAIMGIFLVRAIFGFL, IAYDVTGVAGAATNALTSLI, LSIVGLLVWLLWLNWQLTLIT, QSPLVQFFAASGVAIIMGVAL, and QTTVGSFVSFVTAMLMLMAPL. Residues 26-309 enclose the ABC transmembrane type-1 domain; the sequence is LAALACMGVA…VTDVNAPIQR (284 aa). An ABC transporter domain is found at 341 to 577; that stretch reads VEFDGVTFTY…DGLYARLYRM (237 aa). 375-382 provides a ligand contact to ATP; it reads GPSGSGKT.

Belongs to the ABC transporter superfamily. Lipid exporter (TC 3.A.1.106) family. As to quaternary structure, homodimer.

It is found in the cell inner membrane. The catalysed reaction is ATP + H2O + lipid A-core oligosaccharideSide 1 = ADP + phosphate + lipid A-core oligosaccharideSide 2.. Its function is as follows. Involved in lipopolysaccharide (LPS) biosynthesis. Translocates lipid A-core from the inner to the outer leaflet of the inner membrane. Transmembrane domains (TMD) form a pore in the inner membrane and the ATP-binding domain (NBD) is responsible for energy generation. The polypeptide is ATP-dependent lipid A-core flippase (Dechloromonas aromatica (strain RCB)).